The primary structure comprises 256 residues: Pyridoxine 5'-phosphate synthase (256 aa).

The 3-amino-2-oxopropyl phosphate site is built by Asn-8 and Arg-19. The active-site Proton acceptor is the His-44. Arg-46 and His-51 together coordinate 1-deoxy-D-xylulose 5-phosphate. Glu-74 serves as the catalytic Proton acceptor. A 1-deoxy-D-xylulose 5-phosphate-binding site is contributed by Thr-111. His-202 (proton donor) is an active-site residue. Residues Asp-203 and 225–226 contribute to the 3-amino-2-oxopropyl phosphate site; that span reads GH.

The protein belongs to the PNP synthase family. In terms of assembly, homooctamer; tetramer of dimers.

It localises to the cytoplasm. It carries out the reaction 3-amino-2-oxopropyl phosphate + 1-deoxy-D-xylulose 5-phosphate = pyridoxine 5'-phosphate + phosphate + 2 H2O + H(+). The protein operates within cofactor biosynthesis; pyridoxine 5'-phosphate biosynthesis; pyridoxine 5'-phosphate from D-erythrose 4-phosphate: step 5/5. In terms of biological role, catalyzes the complicated ring closure reaction between the two acyclic compounds 1-deoxy-D-xylulose-5-phosphate (DXP) and 3-amino-2-oxopropyl phosphate (1-amino-acetone-3-phosphate or AAP) to form pyridoxine 5'-phosphate (PNP) and inorganic phosphate. The chain is Pyridoxine 5'-phosphate synthase from Xanthomonas campestris pv. campestris (strain 8004).